Here is a 75-residue protein sequence, read N- to C-terminus: Translation initiation factor IF-1 1 (75 aa).

The S1-like domain maps to 1 to 74; that stretch reads MARSDMIEVD…TRGRIVYRYR (74 aa).

Belongs to the IF-1 family. Component of the 30S ribosomal translation pre-initiation complex which assembles on the 30S ribosome in the order IF-2 and IF-3, IF-1 and N-formylmethionyl-tRNA(fMet); mRNA recruitment can occur at any time during PIC assembly.

It localises to the cytoplasm. One of the essential components for the initiation of protein synthesis. Stabilizes the binding of IF-2 and IF-3 on the 30S subunit to which N-formylmethionyl-tRNA(fMet) subsequently binds. Helps modulate mRNA selection, yielding the 30S pre-initiation complex (PIC). Upon addition of the 50S ribosomal subunit IF-1, IF-2 and IF-3 are released leaving the mature 70S translation initiation complex. The polypeptide is Translation initiation factor IF-1 1 (Symbiobacterium thermophilum (strain DSM 24528 / JCM 14929 / IAM 14863 / T)).